An 86-amino-acid polypeptide reads, in one-letter code: Small ribosomal subunit protein bS20 (86 aa).

The segment at methionine 1–serine 23 is disordered.

The protein belongs to the bacterial ribosomal protein bS20 family.

Its function is as follows. Binds directly to 16S ribosomal RNA. The chain is Small ribosomal subunit protein bS20 from Buchnera aphidicola subsp. Baizongia pistaciae (strain Bp).